A 364-amino-acid chain; its full sequence is Programmed cell death protein 2-like (364 aa).

Residue alanine 2 is modified to N-acetylalanine. The tract at residues 125–150 (EGSQDWGSDTEETPPPPASDLGSDSN) is disordered.

Its function is as follows. Over-expression suppresses AP1, CREB, NFAT, and NF-kB transcriptional activation, and delays cell cycle progression at S phase. The sequence is that of Programmed cell death protein 2-like (Pdcd2l) from Mus musculus (Mouse).